A 418-amino-acid chain; its full sequence is Queuine tRNA-ribosyltransferase accessory subunit 2 (418 aa).

The Zn(2+) site is built by C325, C327, C330, and H356.

The protein belongs to the queuine tRNA-ribosyltransferase family. QTRT2 subfamily. In terms of assembly, heterodimer of a catalytic subunit and an accessory subunit. Requires Zn(2+) as cofactor.

The protein resides in the cytoplasm. Functionally, non-catalytic subunit of the queuine tRNA-ribosyltransferase (TGT) that catalyzes the base-exchange of a guanine (G) residue with queuine (Q) at position 34 (anticodon wobble position) in tRNAs with GU(N) anticodons (tRNA-Asp, -Asn, -His and -Tyr), resulting in the hypermodified nucleoside queuosine (7-(((4,5-cis-dihydroxy-2-cyclopenten-1-yl)amino)methyl)-7-deazaguanosine). This chain is Queuine tRNA-ribosyltransferase accessory subunit 2, found in Drosophila sechellia (Fruit fly).